The chain runs to 745 residues: Junction plakoglobin (745 aa).

Met-1 carries the N-acetylmethionine modification. Thr-14 carries O-linked (GlcNAc) threonine glycosylation. Phosphoserine occurs at positions 99 and 125. ARM repeat units lie at residues 132 to 171 (NYQD…QLSK), 172 to 215 (KEAS…LSHH), 216 to 255 (REGL…NLLL), 258 to 297 (EGAK…LLAY), 298 to 341 (GNQE…LSVC), 342 to 381 (PSNK…NLSD), 383 to 420 (ATKQ…NLTC), 423 to 464 (SKNK…HLTS), 470 to 510 (EMAQ…NLAL), 512 to 551 (PANH…QPYT), 574 to 613 (PMNR…ELAQ), and 615 to 661 (KEAA…PDYR). The interaction with DSC1 and DSG1 stretch occupies residues 132-297 (NYQDDAELAT…TTDCLQLLAY (166 aa)). Ser-182 is subject to Phosphoserine. The segment at 574–661 (PMNRMEIFRL…ISEDKNPDYR (88 aa)) is interaction with DSC1. Residues Ser-665 and Ser-730 each carry the phosphoserine modification.

The protein belongs to the beta-catenin family. As to quaternary structure, homodimer. Component of an E-cadherin/catenin adhesion complex composed of at least E-cadherin/CDH1 and gamma-catenin/JUP, and possibly alpha-catenin/CTNNA1; the complex is located to adherens junctions. The stable association of CTNNA1 is controversial as CTNNA1 was shown not to bind to F-actin when assembled in the complex. Interacts with MUC1. Interacts with CAV1. Interacts with PTPRJ. Interacts with DSG1. Interacts with DSC1 and DSC2. Interacts with PKP2. Interacts with PKP3 (via N-terminus); the interaction is required for PKP3 localization to desmosome cell-cell junctions. Interacts with DSG4. Post-translationally, may be phosphorylated by FER. As to expression, expressed in the heart (at protein level).

It localises to the cell junction. It is found in the adherens junction. Its subcellular location is the desmosome. The protein localises to the cytoplasm. The protein resides in the cytoskeleton. It localises to the cell membrane. It is found in the nucleus. In terms of biological role, common junctional plaque protein. The membrane-associated plaques are architectural elements in an important strategic position to influence the arrangement and function of both the cytoskeleton and the cells within the tissue. The presence of plakoglobin in both the desmosomes and in the intermediate junctions suggests that it plays a central role in the structure and function of submembranous plaques. Acts as a substrate for VE-PTP and is required by it to stimulate VE-cadherin function in endothelial cells. Can replace beta-catenin in E-cadherin/catenin adhesion complexes which are proposed to couple cadherins to the actin cytoskeleton. This chain is Junction plakoglobin, found in Homo sapiens (Human).